We begin with the raw amino-acid sequence, 234 residues long: Zein-alpha A30 (234 aa).

Positions 1 to 21 (MAAKIFCLLMLLGLSASAATA) are cleaved as a signal peptide.

This sequence belongs to the zein family.

Its function is as follows. Zeins are major seed storage proteins. The chain is Zein-alpha A30 from Zea mays (Maize).